The following is a 478-amino-acid chain: DNA-directed RNA polymerase II subunit RPB1 (478 aa).

Residues C68, C71, C78, H81, C108, C111, and C149 each contribute to the Zn(2+) site. 2 residues coordinate Mg(2+): D474 and D476.

It belongs to the RNA polymerase beta' chain family. Component of the RNA polymerase II (Pol II) complex consisting of 12 subunits. In terms of processing, phosphorylation activates POL II.

The protein resides in the nucleus. It carries out the reaction RNA(n) + a ribonucleoside 5'-triphosphate = RNA(n+1) + diphosphate. Functionally, DNA-dependent RNA polymerase catalyzes the transcription of DNA into RNA using the four ribonucleoside triphosphates as substrates. Largest and catalytic component of RNA polymerase II which synthesizes mRNA precursors and many functional non-coding RNAs. Forms the polymerase active center together with the second largest subunit. Pol II is the central component of the basal RNA polymerase II transcription machinery. It is composed of mobile elements that move relative to each other. RPB1 is part of the core element with the central large cleft, the clamp element that moves to open and close the cleft and the jaws that are thought to grab the incoming DNA template. At the start of transcription, a single-stranded DNA template strand of the promoter is positioned within the central active site cleft of Pol II. A bridging helix emanates from RPB1 and crosses the cleft near the catalytic site and is thought to promote translocation of Pol II by acting as a ratchet that moves the RNA-DNA hybrid through the active site by switching from straight to bent conformations at each step of nucleotide addition. During transcription elongation, Pol II moves on the template as the transcript elongates. Elongation is influenced by the phosphorylation status of the C-terminal domain (CTD) of Pol II largest subunit (RPB1), which serves as a platform for assembly of factors that regulate transcription initiation, elongation, termination and mRNA processing. The sequence is that of DNA-directed RNA polymerase II subunit RPB1 (RPB1) from Euplotoides octocarinatus (Freshwater ciliate).